The following is a 474-amino-acid chain: Cytochrome c-552 (474 aa).

Positions 1-29 (MSIKHWMASSVSVTALVMTALLNITAVSA) are cleaved as a signal peptide. H91 provides a ligand contact to heme c. Residues C119, C122, and K123 each coordinate heme. Heme c contacts are provided by C157, C160, H161, C206, C209, and H210. E212, Y213, K258, and Q260 together coordinate Ca(2+). A substrate-binding site is contributed by Y213. Residue H261 coordinates substrate. The heme c site is built by H272, C279, C282, H283, H298, C311, C314, H315, and H390.

This sequence belongs to the cytochrome c-552 family. Ca(2+) is required as a cofactor. Heme c serves as cofactor.

It is found in the periplasm. The catalysed reaction is 6 Fe(III)-[cytochrome c] + NH4(+) + 2 H2O = 6 Fe(II)-[cytochrome c] + nitrite + 8 H(+). The protein operates within nitrogen metabolism; nitrate reduction (assimilation). Functionally, catalyzes the reduction of nitrite to ammonia, consuming six electrons in the process. The chain is Cytochrome c-552 from Vibrio vulnificus (strain CMCP6).